A 934-amino-acid chain; its full sequence is AP-2 complex subunit alpha (934 aa).

The interval 623-670 is disordered; it reads RVPENAEIRETKSPVPNSHNNAHSNAQTNHTSSANNANASSDLLGLST. The span at 636 to 645 shows a compositional bias: polar residues; sequence PVPNSHNNAH. The span at 646–663 shows a compositional bias: low complexity; sequence SNAQTNHTSSANNANASS.

It belongs to the adapter complexes large subunit family. As to quaternary structure, adaptor protein complex 2 (AP-2) is a heterotetramer composed of two large adaptins (alpha-type and beta-type subunits), a medium adaptin (mu-type subunit AP50) and a small adaptin (sigma-type subunit AP17).

Its subcellular location is the cell membrane. The protein localises to the membrane. It localises to the coated pit. Functionally, adaptins are components of the adapter complexes which link clathrin to receptors in coated vesicles. Clathrin-associated protein complexes are believed to interact with the cytoplasmic tails of membrane proteins, leading to their selection and concentration. Alpha adaptin is a subunit of the plasma membrane adapter. In Anopheles gambiae (African malaria mosquito), this protein is AP-2 complex subunit alpha.